Here is a 309-residue protein sequence, read N- to C-terminus: Ribonuclease Z (309 aa).

Positions 63, 65, 67, 68, 145, 216, and 274 each coordinate Zn(2+). Aspartate 67 functions as the Proton acceptor in the catalytic mechanism.

The protein belongs to the RNase Z family. In terms of assembly, homodimer. Zn(2+) serves as cofactor.

The enzyme catalyses Endonucleolytic cleavage of RNA, removing extra 3' nucleotides from tRNA precursor, generating 3' termini of tRNAs. A 3'-hydroxy group is left at the tRNA terminus and a 5'-phosphoryl group is left at the trailer molecule.. Its function is as follows. Zinc phosphodiesterase, which displays some tRNA 3'-processing endonuclease activity. Probably involved in tRNA maturation, by removing a 3'-trailer from precursor tRNA. The polypeptide is Ribonuclease Z (Streptococcus sanguinis (strain SK36)).